Here is a 702-residue protein sequence, read N- to C-terminus: Ribosomal RNA large subunit methyltransferase K/L (702 aa).

Positions 43–154 (LIYQSLMWSR…KETASIALDL (112 aa)) constitute a THUMP domain.

Belongs to the methyltransferase superfamily. RlmKL family.

Its subcellular location is the cytoplasm. The catalysed reaction is guanosine(2445) in 23S rRNA + S-adenosyl-L-methionine = N(2)-methylguanosine(2445) in 23S rRNA + S-adenosyl-L-homocysteine + H(+). It carries out the reaction guanosine(2069) in 23S rRNA + S-adenosyl-L-methionine = N(2)-methylguanosine(2069) in 23S rRNA + S-adenosyl-L-homocysteine + H(+). Specifically methylates the guanine in position 2445 (m2G2445) and the guanine in position 2069 (m7G2069) of 23S rRNA. The protein is Ribosomal RNA large subunit methyltransferase K/L of Salmonella typhi.